The following is a 542-amino-acid chain: CTP synthase (542 aa).

The amidoligase domain stretch occupies residues M1–I265. S13 is a binding site for CTP. S13 is a binding site for UTP. ATP-binding positions include S14–L19 and D71. Mg(2+) contacts are provided by D71 and E139. CTP-binding positions include D146–E148, K186–Q191, and K222. UTP contacts are provided by residues K186 to Q191 and K222. R238 to V240 is an ATP binding site. Residues S291–L541 form the Glutamine amidotransferase type-1 domain. G353 is an L-glutamine binding site. C380 serves as the catalytic Nucleophile; for glutamine hydrolysis. Residues F381–Q384, E404, and R469 each bind L-glutamine. Catalysis depends on residues H514 and E516.

This sequence belongs to the CTP synthase family. In terms of assembly, homotetramer.

It carries out the reaction UTP + L-glutamine + ATP + H2O = CTP + L-glutamate + ADP + phosphate + 2 H(+). The enzyme catalyses L-glutamine + H2O = L-glutamate + NH4(+). The catalysed reaction is UTP + NH4(+) + ATP = CTP + ADP + phosphate + 2 H(+). Its pathway is pyrimidine metabolism; CTP biosynthesis via de novo pathway; CTP from UDP: step 2/2. Its activity is regulated as follows. Allosterically activated by GTP, when glutamine is the substrate; GTP has no effect on the reaction when ammonia is the substrate. The allosteric effector GTP functions by stabilizing the protein conformation that binds the tetrahedral intermediate(s) formed during glutamine hydrolysis. Inhibited by the product CTP, via allosteric rather than competitive inhibition. In terms of biological role, catalyzes the ATP-dependent amination of UTP to CTP with either L-glutamine or ammonia as the source of nitrogen. Regulates intracellular CTP levels through interactions with the four ribonucleotide triphosphates. The sequence is that of CTP synthase from Methylobacterium nodulans (strain LMG 21967 / CNCM I-2342 / ORS 2060).